We begin with the raw amino-acid sequence, 516 residues long: Polyprenol-phosphate-mannose--protein mannosyltransferase (516 aa).

9 consecutive transmembrane segments (helical) span residues 113 to 133 (YNGL…VMLV), 143 to 163 (STLV…SFVS), 166 to 186 (TALL…CLMV), 234 to 254 (WSGL…DAIA), 275 to 295 (AAYV…APWF), 384 to 404 (VMLV…GWAL), 413 to 433 (WRYG…FADI), 437 to 457 (MYFF…ALIL), and 473 to 493 (LGLL…AWMY).

Belongs to the glycosyltransferase 39 family.

It localises to the cell membrane. Its pathway is protein modification; protein glycosylation. Protein O-mannosyltransferase that catalyzes the transfer of a single mannose residue from a polyprenol phospho-mannosyl lipidic donor to the hydroxyl group of selected serine and threonine residues in acceptor proteins. This chain is Polyprenol-phosphate-mannose--protein mannosyltransferase, found in Mycolicibacterium smegmatis (strain ATCC 700084 / mc(2)155) (Mycobacterium smegmatis).